Here is a 150-residue protein sequence, read N- to C-terminus: Alkaline nuclease (150 aa).

Belongs to the baculo-herpesviridae alkaline nuclease family.

The polypeptide is Alkaline nuclease (UL12) (Suid herpesvirus 1 (strain NIA-3) (SuHV-1)).